The following is a 255-amino-acid chain: MRILLTNDDGIQAVGIRHLYKGLIDAGHDVLVAAPISEQSAVGHAITIASPLRVKEFVENGFRGLGVSGTPADCVKLALTTLMQDKPDLVVSGINAGANVGVDILYSGTVSAATEGALMGYPAVAVSADDFAPVDLLEQGAYVADFIAGRPWEALAPRTVLNLNFPKRPIAETLPLALCPPTQAVYNDWYVTRQDPRGRDYHWLTGVIPPEALTPDSDRALLTKGHITLTPLRFELADAAAMASLAARLGLRTDV.

A divalent metal cation contacts are provided by Asp-8, Asp-9, Ser-40, and Asn-95.

The protein belongs to the SurE nucleotidase family. The cofactor is a divalent metal cation.

It localises to the cytoplasm. The catalysed reaction is a ribonucleoside 5'-phosphate + H2O = a ribonucleoside + phosphate. In terms of biological role, nucleotidase that shows phosphatase activity on nucleoside 5'-monophosphates. The polypeptide is 5'-nucleotidase SurE (Solidesulfovibrio magneticus (strain ATCC 700980 / DSM 13731 / RS-1) (Desulfovibrio magneticus)).